We begin with the raw amino-acid sequence, 259 residues long: Probable iron export permease protein FetB (259 aa).

Over 1-5 (MNSHN) the chain is Periplasmic. Residues 6-26 (ITNESLALALMLVVVAILISH) traverse the membrane as a helical segment. Over 27–35 (KEKLALEKD) the chain is Cytoplasmic. Helical transmembrane passes span 36 to 56 (ILWS…VLKY) and 57 to 77 (IFSV…CFNA). The Cytoplasmic portion of the chain corresponds to 78 to 91 (AWNAQKRSKYIAKA). Residues 92 to 112 (FISSFIAITVGAGITLAVLIL) form a helical membrane-spanning segment. The Periplasmic segment spans residues 113 to 117 (SGSIE). A helical transmembrane segment spans residues 118-138 (FIPMQVIPIAGMIAGNAMVAV). Residues 139–191 (GLCYNNLGQRVISEQQQIQEKLSLGATPKQASAILIRDSIRAALIPTVDSAKT) are Cytoplasmic-facing. Residues 192-212 (VGLVSLPGMMSGLIFAGIDPV) form a helical membrane-spanning segment. Residues 213–218 (KAIKYQ) lie on the Periplasmic side of the membrane. The helical transmembrane segment at 219-239 (IMVTFMLLSTASLSTIIACYL) threads the bilayer. Residues 240 to 259 (TYRKFYNSRHQLVVTQLKKK) lie on the Cytoplasmic side of the membrane.

Belongs to the UPF0014 family. The complex is composed of two ATP-binding proteins (FetA) and two transmembrane proteins (FetB).

It localises to the cell inner membrane. Functionally, part of the ABC transporter complex FetAB, which is probably involved in iron export and enhances resistance to H(2)O(2)-mediated oxidative stress. Probably responsible for the translocation of the substrate across the membrane. This Escherichia coli (strain K12) protein is Probable iron export permease protein FetB (fetB).